Consider the following 373-residue polypeptide: Chaperone protein DnaJ (373 aa).

A J domain is found at 4-68 (NYYQILGVSK…QKRAAYDRLG (65 aa)). A CR-type zinc finger spans residues 136–214 (GIEKNINFSS…CHGMGRYHKQ (79 aa)). Zn(2+) is bound by residues Cys-149, Cys-152, Cys-166, Cys-169, Cys-188, Cys-191, Cys-202, and Cys-205. CXXCXGXG motif repeat units lie at residues 149–156 (CNTCHGSG), 166–173 (CDACSGVG), 188–195 (CHKCQGNG), and 202–209 (CKKCHGMG).

The protein belongs to the DnaJ family. In terms of assembly, homodimer. The cofactor is Zn(2+).

It localises to the cytoplasm. Its function is as follows. Participates actively in the response to hyperosmotic and heat shock by preventing the aggregation of stress-denatured proteins and by disaggregating proteins, also in an autonomous, DnaK-independent fashion. Unfolded proteins bind initially to DnaJ; upon interaction with the DnaJ-bound protein, DnaK hydrolyzes its bound ATP, resulting in the formation of a stable complex. GrpE releases ADP from DnaK; ATP binding to DnaK triggers the release of the substrate protein, thus completing the reaction cycle. Several rounds of ATP-dependent interactions between DnaJ, DnaK and GrpE are required for fully efficient folding. Also involved, together with DnaK and GrpE, in the DNA replication of plasmids through activation of initiation proteins. In Rickettsia rickettsii (strain Sheila Smith), this protein is Chaperone protein DnaJ.